A 257-amino-acid polypeptide reads, in one-letter code: Ribonuclease HII (257 aa).

The 186-residue stretch at 72 to 257 (TYIAGIDEVG…FAPIKDMIQK (186 aa)) folds into the RNase H type-2 domain. Aspartate 78, glutamate 79, and aspartate 170 together coordinate a divalent metal cation.

It belongs to the RNase HII family. Mn(2+) serves as cofactor. It depends on Mg(2+) as a cofactor.

It localises to the cytoplasm. It carries out the reaction Endonucleolytic cleavage to 5'-phosphomonoester.. Functionally, endonuclease that specifically degrades the RNA of RNA-DNA hybrids. This chain is Ribonuclease HII, found in Bacillus cereus (strain B4264).